Reading from the N-terminus, the 332-residue chain is 2,3-diketo-L-gulonate reductase (332 aa).

The Proton donor role is filled by histidine 44. NAD(+) is bound by residues 168-174, 224-225, and 304-306; these read ITMIDMS, WK, and GHE.

The protein belongs to the LDH2/MDH2 oxidoreductase family. DlgD subfamily. As to quaternary structure, homodimer.

The protein resides in the cytoplasm. The catalysed reaction is 3-dehydro-L-gulonate + NAD(+) = 2,3-dioxo-L-gulonate + NADH + H(+). It catalyses the reaction 3-dehydro-L-gulonate + NADP(+) = 2,3-dioxo-L-gulonate + NADPH + H(+). In terms of biological role, catalyzes the reduction of 2,3-diketo-L-gulonate in the presence of NADH, to form 3-keto-L-gulonate. The sequence is that of 2,3-diketo-L-gulonate reductase from Citrobacter koseri (strain ATCC BAA-895 / CDC 4225-83 / SGSC4696).